A 267-amino-acid chain; its full sequence is Glutamate racemase (267 aa).

Residues aspartate 10–serine 11 and tyrosine 42–glycine 43 contribute to the substrate site. The Proton donor/acceptor role is filled by cysteine 73. A substrate-binding site is contributed by asparagine 74–threonine 75. Cysteine 183 (proton donor/acceptor) is an active-site residue. Position 184 to 185 (threonine 184 to histidine 185) interacts with substrate.

The protein belongs to the aspartate/glutamate racemases family.

The catalysed reaction is L-glutamate = D-glutamate. The protein operates within cell wall biogenesis; peptidoglycan biosynthesis. In terms of biological role, provides the (R)-glutamate required for cell wall biosynthesis. The protein is Glutamate racemase of Lactobacillus helveticus (strain DPC 4571).